The chain runs to 1641 residues: Histone-lysine N-methyltransferase SETD1 (1641 aa).

Residues 1 to 23 (MQDVRNINLVNNSSNSHDSSLAN) are disordered. Residues 8–23 (NLVNNSSNSHDSSLAN) show a composition bias toward low complexity. One can recognise an RRM domain in the interval 101 to 179 (VEVTIVNLND…KILDVFCDPF (79 aa)). Disordered stretches follow at residues 236-384 (YTTQ…IDQR), 537-596 (APPF…SDEE), 831-915 (RIRK…SSSS), 930-949 (KART…NLNQ), 1119-1155 (QEKR…RKTA), and 1205-1226 (NSKG…SSQA). Basic and acidic residues predominate over residues 244-284 (IPNRSRDRNWNRDKERERDRHFKERSRHSSERSYDRDRGMR). A compositionally biased stretch (basic residues) spans 291–300 (IRRRRTFYRR). Basic and acidic residues-rich tracts occupy residues 308 to 341 (EDSR…ESFR) and 349 to 384 (KGRD…IDQR). Positions 556–568 (EVFSDVNSDSNNS) are enriched in low complexity. Basic and acidic residues-rich tracts occupy residues 569-579 (ENKKRSCEKNN) and 844-867 (NFLE…KEDS). A compositionally biased stretch (low complexity) spans 904-915 (SASSFFSSSSSS). Basic and acidic residues-rich tracts occupy residues 930–939 (KARTSEEDSP) and 1119–1128 (QEKRIEKSLD). Residues 1091–1132 (SEEEKEYQERRKRNTEYMAQMEREFLEEQEKRIEKSLDKNLQ) adopt a coiled-coil conformation. Polar residues-rich tracts occupy residues 1129–1145 (KNLQ…NSPR) and 1205–1217 (NSKG…QSPV). A RxxxRR motif motif is present at residues 1473–1478 (RSNQRR). Positions 1502-1619 (KQLKFAKSAI…INEEITYDYK (118 aa)) constitute an SET domain. Y1618 contributes to the S-adenosyl-L-methionine binding site. The Post-SET domain maps to 1625–1641 (EKIPCLCGAQGCRGTLN).

Belongs to the class V-like SAM-binding methyltransferase superfamily. In terms of assembly, component of the Set1C/COMPASS complex, composed at least of the catalytic subunit Set1, wds/WDR5, Wdr82, Rbbp5, ash2, Cfp1/CXXC1, hcf and Dpy-30L1.

It is found in the nucleus. The protein resides in the chromosome. The enzyme catalyses L-lysyl(4)-[histone H3] + 3 S-adenosyl-L-methionine = N(6),N(6),N(6)-trimethyl-L-lysyl(4)-[histone H3] + 3 S-adenosyl-L-homocysteine + 3 H(+). It catalyses the reaction N(6)-methyl-L-lysyl(4)-[histone H3] + S-adenosyl-L-methionine = N(6),N(6)-dimethyl-L-lysyl(4)-[histone H3] + S-adenosyl-L-homocysteine + H(+). The catalysed reaction is N(6),N(6)-dimethyl-L-lysyl(4)-[histone H3] + S-adenosyl-L-methionine = N(6),N(6),N(6)-trimethyl-L-lysyl(4)-[histone H3] + S-adenosyl-L-homocysteine + H(+). Functionally, catalytic component of the COMPASS (Set1C) complex that specifically mono-, di- and trimethylates histone H3 to form H3K4me1/2/3. Binds RNAs which might negatively affect its histone methyltransferase activity. COMPASS recognizes ubiquitinated H2B on one face of the nucleosome which stimulates the methylation of H3 on the opposing face. Set1-dependent trimethylation regulates chromatin changes at active promoters that ensure optimal RNA polymerase II release into productive elongation, thereby contributing to optimal transcription. The polypeptide is Histone-lysine N-methyltransferase SETD1 (Drosophila melanogaster (Fruit fly)).